Consider the following 357-residue polypeptide: GTPase Obg (357 aa).

The region spanning 1–159 is the Obg domain; the sequence is MKFVDEAFID…KSLKLELKVL (159 aa). The OBG-type G domain occupies 160–334; the sequence is ADVGLLGMPN…LVQSIFQHVH (175 aa). GTP is bound by residues 166-173, 191-195, 213-216, 284-287, and 315-317; these read GMPNAGKS, FTTLH, DIPG, NKLD, and SAL. 2 residues coordinate Mg(2+): S173 and T193.

It belongs to the TRAFAC class OBG-HflX-like GTPase superfamily. OBG GTPase family. In terms of assembly, monomer. Mg(2+) is required as a cofactor.

It is found in the cytoplasm. In terms of biological role, an essential GTPase which binds GTP, GDP and possibly (p)ppGpp with moderate affinity, with high nucleotide exchange rates and a fairly low GTP hydrolysis rate. Plays a role in control of the cell cycle, stress response, ribosome biogenesis and in those bacteria that undergo differentiation, in morphogenesis control. This Acidovorax sp. (strain JS42) protein is GTPase Obg.